Consider the following 66-residue polypeptide: Large ribosomal subunit protein bL35c (66 aa).

The protein belongs to the bacterial ribosomal protein bL35 family.

The protein resides in the plastid. The protein localises to the chloroplast. In Guillardia theta (Cryptophyte), this protein is Large ribosomal subunit protein bL35c.